The sequence spans 104 residues: L-rhamnose mutarotase (104 aa).

Substrate is bound at residue Tyr-18. His-22 serves as the catalytic Proton donor. Residues Tyr-41 and 76-77 (WW) each bind substrate.

The protein belongs to the rhamnose mutarotase family. In terms of assembly, homodimer.

Its subcellular location is the cytoplasm. The catalysed reaction is alpha-L-rhamnose = beta-L-rhamnose. It functions in the pathway carbohydrate metabolism; L-rhamnose metabolism. Its function is as follows. Involved in the anomeric conversion of L-rhamnose. This chain is L-rhamnose mutarotase, found in Salmonella newport (strain SL254).